Here is a 365-residue protein sequence, read N- to C-terminus: tRNA/tmRNA (uracil-C(5))-methyltransferase (365 aa).

S-adenosyl-L-methionine-binding residues include glutamine 189, tyrosine 217, asparagine 222, glutamate 238, and aspartate 298. Cysteine 323 acts as the Nucleophile in catalysis. The active-site Proton acceptor is glutamate 357.

The protein belongs to the class I-like SAM-binding methyltransferase superfamily. RNA M5U methyltransferase family. TrmA subfamily.

The enzyme catalyses uridine(54) in tRNA + S-adenosyl-L-methionine = 5-methyluridine(54) in tRNA + S-adenosyl-L-homocysteine + H(+). It carries out the reaction uridine(341) in tmRNA + S-adenosyl-L-methionine = 5-methyluridine(341) in tmRNA + S-adenosyl-L-homocysteine + H(+). Dual-specificity methyltransferase that catalyzes the formation of 5-methyluridine at position 54 (m5U54) in all tRNAs, and that of position 341 (m5U341) in tmRNA (transfer-mRNA). This Psychromonas ingrahamii (strain DSM 17664 / CCUG 51855 / 37) protein is tRNA/tmRNA (uracil-C(5))-methyltransferase.